Here is a 131-residue protein sequence, read N- to C-terminus: Large ribosomal subunit protein eL32 (131 aa).

This sequence belongs to the eukaryotic ribosomal protein eL32 family. In terms of assembly, component of the large ribosomal subunit. Mature ribosomes consist of a small (40S) and a large (60S) subunit. The 40S subunit contains about 32 different proteins and 1 molecule of RNA (18S). The 60S subunit contains 45 different proteins and 3 molecules of RNA (25S, 5.8S and 5S).

The protein resides in the cytoplasm. Component of the ribosome, a large ribonucleoprotein complex responsible for the synthesis of proteins in the cell. The small ribosomal subunit (SSU) binds messenger RNAs (mRNAs) and translates the encoded message by selecting cognate aminoacyl-transfer RNA (tRNA) molecules. The large subunit (LSU) contains the ribosomal catalytic site termed the peptidyl transferase center (PTC), which catalyzes the formation of peptide bonds, thereby polymerizing the amino acids delivered by tRNAs into a polypeptide chain. The nascent polypeptides leave the ribosome through a tunnel in the LSU and interact with protein factors that function in enzymatic processing, targeting, and the membrane insertion of nascent chains at the exit of the ribosomal tunnel. In Candida albicans (strain SC5314 / ATCC MYA-2876) (Yeast), this protein is Large ribosomal subunit protein eL32.